A 510-amino-acid polypeptide reads, in one-letter code: 2,3-bisphosphoglycerate-independent phosphoglycerate mutase (510 aa).

Mn(2+) is bound at residue aspartate 12. Residue tyrosine 36 is modified to Phosphotyrosine. Residue serine 62 participates in Mn(2+) binding. Serine 62 acts as the Phosphoserine intermediate in catalysis. Residues histidine 123, 153 to 154 (RD), arginine 185, arginine 191, 261 to 264 (RPDR), and lysine 336 each bind substrate. Mn(2+) contacts are provided by aspartate 403, histidine 407, aspartate 444, histidine 445, and histidine 462.

The protein belongs to the BPG-independent phosphoglycerate mutase family. Monomer. The cofactor is Mn(2+).

It carries out the reaction (2R)-2-phosphoglycerate = (2R)-3-phosphoglycerate. The protein operates within carbohydrate degradation; glycolysis; pyruvate from D-glyceraldehyde 3-phosphate: step 3/5. Its function is as follows. Essential for rapid growth and for sporulation. Catalyzes the interconversion of 2-phosphoglycerate and 3-phosphoglycerate. The protein is 2,3-bisphosphoglycerate-independent phosphoglycerate mutase of Halalkalibacterium halodurans (strain ATCC BAA-125 / DSM 18197 / FERM 7344 / JCM 9153 / C-125) (Bacillus halodurans).